Here is a 155-residue protein sequence, read N- to C-terminus: Ribosomal RNA large subunit methyltransferase H (155 aa).

Residues Leu73, Gly104, and 123–128 (LSPLTL) contribute to the S-adenosyl-L-methionine site.

Belongs to the RNA methyltransferase RlmH family. As to quaternary structure, homodimer.

Its subcellular location is the cytoplasm. The catalysed reaction is pseudouridine(1915) in 23S rRNA + S-adenosyl-L-methionine = N(3)-methylpseudouridine(1915) in 23S rRNA + S-adenosyl-L-homocysteine + H(+). Functionally, specifically methylates the pseudouridine at position 1915 (m3Psi1915) in 23S rRNA. The polypeptide is Ribosomal RNA large subunit methyltransferase H (Pseudomonas putida (strain W619)).